A 238-amino-acid chain; its full sequence is Calmodulin-binding protein 25 (238 aa).

The segment covering 68–78 (STNTLSSTVSG) has biased composition (polar residues). Positions 68-87 (STNTLSSTVSGASDPEIIGG) are disordered. The short motif at 92–108 (KRNCLLTDGKAAKRRAR) is the Bipartite nuclear localization signal element. The short motif at 125 to 134 (FRQMVQQVTG) is the VQ element. Residues 201-220 (SSVGLPSGKPSATADPGGSA) are disordered.

As to quaternary structure, interacts with calmodulin (CaM). Interacts with WRKY25 and WRKY51. In terms of tissue distribution, expressed in leaves, flowers and siliques.

It localises to the nucleus. Functionally, calmodulin-binding protein that functions as a negative regulator of osmotic stress tolerance. The polypeptide is Calmodulin-binding protein 25 (Arabidopsis thaliana (Mouse-ear cress)).